We begin with the raw amino-acid sequence, 261 residues long: Probable septum site-determining protein MinC (261 aa).

This sequence belongs to the MinC family. As to quaternary structure, interacts with MinD and FtsZ.

Its function is as follows. Cell division inhibitor that blocks the formation of polar Z ring septums. Rapidly oscillates between the poles of the cell to destabilize FtsZ filaments that have formed before they mature into polar Z rings. Prevents FtsZ polymerization. In Burkholderia cenocepacia (strain ATCC BAA-245 / DSM 16553 / LMG 16656 / NCTC 13227 / J2315 / CF5610) (Burkholderia cepacia (strain J2315)), this protein is Probable septum site-determining protein MinC.